We begin with the raw amino-acid sequence, 314 residues long: Formimidoylglutamase (314 aa).

Mn(2+) contacts are provided by histidine 127, aspartate 153, histidine 155, aspartate 157, aspartate 245, and aspartate 247.

The protein belongs to the arginase family. It depends on Mn(2+) as a cofactor.

The enzyme catalyses N-formimidoyl-L-glutamate + H2O = formamide + L-glutamate. It functions in the pathway amino-acid degradation; L-histidine degradation into L-glutamate; L-glutamate from N-formimidoyl-L-glutamate (hydrolase route): step 1/1. Catalyzes the conversion of N-formimidoyl-L-glutamate to L-glutamate and formamide. The polypeptide is Formimidoylglutamase (Aeromonas hydrophila subsp. hydrophila (strain ATCC 7966 / DSM 30187 / BCRC 13018 / CCUG 14551 / JCM 1027 / KCTC 2358 / NCIMB 9240 / NCTC 8049)).